Reading from the N-terminus, the 261-residue chain is Ribosome biogenesis protein NSA2 (261 aa).

Basic and acidic residues predominate over residues 1 to 40 (MPQNDYIERHIKQHGKRLDHEERKRKREARESHKISERAQ). The segment at 1–43 (MPQNDYIERHIKQHGKRLDHEERKRKREARESHKISERAQKLT) is disordered. 2 short sequence motifs (nuclear localization signal) span residues 15–22 (GKRLDHEE) and 51–58 (AKKRYAEK). The interval 61–87 (MRKKIKAHEQSKVKGSSKPLDTDGDAL) is disordered.

It belongs to the eukaryotic ribosomal protein eS8 family. Ribosome biogenesis protein NSA2 subfamily. Component of the pre-66S ribosomal particle. Interacts with NOP7 and RRP1. Interacts with RSA4 (via WD repeats).

Its subcellular location is the nucleus. The protein localises to the nucleolus. In terms of biological role, involved in the biogenesis of the 60S ribosomal subunit. May play a part in the quality control of pre-60S particles. Under normal, rapid growth conditions, high levels of NSA2 would allow the progression of pre-60S particles through the ITS2 processing. The protein is Ribosome biogenesis protein NSA2 (NSA2) of Saccharomyces cerevisiae (strain YJM789) (Baker's yeast).